Reading from the N-terminus, the 68-residue chain is DNA-directed RNA polymerase subunit omega (68 aa).

The protein belongs to the RNA polymerase subunit omega family. The RNAP catalytic core consists of 2 alpha, 1 beta, 1 beta' and 1 omega subunit. When a sigma factor is associated with the core the holoenzyme is formed, which can initiate transcription.

It carries out the reaction RNA(n) + a ribonucleoside 5'-triphosphate = RNA(n+1) + diphosphate. Its function is as follows. Promotes RNA polymerase assembly. Latches the N- and C-terminal regions of the beta' subunit thereby facilitating its interaction with the beta and alpha subunits. In Chromobacterium violaceum (strain ATCC 12472 / DSM 30191 / JCM 1249 / CCUG 213 / NBRC 12614 / NCIMB 9131 / NCTC 9757 / MK), this protein is DNA-directed RNA polymerase subunit omega.